Consider the following 155-residue polypeptide: Aspartate carbamoyltransferase regulatory chain (155 aa).

Positions 112, 117, 138, and 141 each coordinate Zn(2+).

The protein belongs to the PyrI family. Contains catalytic and regulatory chains. Zn(2+) serves as cofactor.

In terms of biological role, involved in allosteric regulation of aspartate carbamoyltransferase. The sequence is that of Aspartate carbamoyltransferase regulatory chain from Methanocorpusculum labreanum (strain ATCC 43576 / DSM 4855 / Z).